Here is an 87-residue protein sequence, read N- to C-terminus: U3-theraphotoxin-Hhn1a 16 (87 aa).

The signal sequence occupies residues 1-24 (MVNMKASMFLTFAGLVLLFVVCYA). A propeptide spanning residues 25–52 (SESEEKEFPKEMLSSIFAVDNDFKQGER) is cleaved from the precursor. 3 disulfides stabilise this stretch: cysteine 54–cysteine 67, cysteine 61–cysteine 72, and cysteine 66–cysteine 79.

Belongs to the neurotoxin 10 (Hwtx-1) family. 51 (Hntx-8) subfamily. Hntx-8 sub-subfamily. In terms of tissue distribution, expressed by the venom gland.

The protein resides in the secreted. Functionally, ion channel inhibitor. The polypeptide is U3-theraphotoxin-Hhn1a 16 (Cyriopagopus hainanus (Chinese bird spider)).